Consider the following 355-residue polypeptide: Tryptophan--tRNA ligase (355 aa).

ATP is bound by residues 13–15 and 21–22; these read QPT and GN. Positions 14–22 match the 'HIGH' region motif; sequence PTGNLHLGN. Residue D137 participates in L-tryptophan binding. ATP-binding positions include 149–151, I208, and 217–221; these read GED and KMSKS. The 'KMSKS' region motif lies at 217–221; that stretch reads KMSKS.

The protein belongs to the class-I aminoacyl-tRNA synthetase family. In terms of assembly, homodimer.

It localises to the cytoplasm. It catalyses the reaction tRNA(Trp) + L-tryptophan + ATP = L-tryptophyl-tRNA(Trp) + AMP + diphosphate + H(+). Functionally, catalyzes the attachment of tryptophan to tRNA(Trp). The chain is Tryptophan--tRNA ligase from Mesorhizobium japonicum (strain LMG 29417 / CECT 9101 / MAFF 303099) (Mesorhizobium loti (strain MAFF 303099)).